We begin with the raw amino-acid sequence, 249 residues long: tRNA (guanine-N(1)-)-methyltransferase (249 aa).

S-adenosyl-L-methionine is bound by residues glycine 113 and 132 to 137; that span reads VGDFVV.

Belongs to the RNA methyltransferase TrmD family. In terms of assembly, homodimer.

Its subcellular location is the cytoplasm. The catalysed reaction is guanosine(37) in tRNA + S-adenosyl-L-methionine = N(1)-methylguanosine(37) in tRNA + S-adenosyl-L-homocysteine + H(+). Functionally, specifically methylates guanosine-37 in various tRNAs. The polypeptide is tRNA (guanine-N(1)-)-methyltransferase (Desulforudis audaxviator (strain MP104C)).